The sequence spans 104 residues: Small ribosomal subunit protein bS16 (104 aa).

It belongs to the bacterial ribosomal protein bS16 family.

This chain is Small ribosomal subunit protein bS16, found in Gemmatimonas aurantiaca (strain DSM 14586 / JCM 11422 / NBRC 100505 / T-27).